The chain runs to 181 residues: Small ribosomal subunit protein uS4 (181 aa).

Residues 104–166 (RRLQTIVYKK…VTSSFKSRPP (63 aa)) enclose the S4 RNA-binding domain.

It belongs to the universal ribosomal protein uS4 family. In terms of assembly, part of the 30S ribosomal subunit. Contacts protein S5. The interaction surface between S4 and S5 is involved in control of translational fidelity.

Functionally, one of the primary rRNA binding proteins, it binds directly to 16S rRNA where it nucleates assembly of the body of the 30S subunit. With S5 and S12 plays an important role in translational accuracy. The polypeptide is Small ribosomal subunit protein uS4 (Saccharolobus islandicus (strain Y.N.15.51 / Yellowstone #2) (Sulfolobus islandicus)).